We begin with the raw amino-acid sequence, 320 residues long: Malate dehydrogenase (320 aa).

NAD(+)-binding positions include 10-15 (GSGMIG) and Asp34. Substrate is bound by residues Arg83 and Arg89. Residues Asn96 and 119–121 (ITN) contribute to the NAD(+) site. Substrate contacts are provided by Asn121 and Arg152. The active-site Proton acceptor is the His176.

The protein belongs to the LDH/MDH superfamily. MDH type 3 family.

It catalyses the reaction (S)-malate + NAD(+) = oxaloacetate + NADH + H(+). Catalyzes the reversible oxidation of malate to oxaloacetate. The protein is Malate dehydrogenase of Allorhizobium ampelinum (strain ATCC BAA-846 / DSM 112012 / S4) (Agrobacterium vitis (strain S4)).